We begin with the raw amino-acid sequence, 376 residues long: UDP-N-acetylglucosamine--N-acetylmuramyl-(pentapeptide) pyrophosphoryl-undecaprenol N-acetylglucosamine transferase (376 aa).

Residues 11–13 (TGG), Asn-117, Arg-160, Ser-208, and Gln-310 each bind UDP-N-acetyl-alpha-D-glucosamine.

Belongs to the glycosyltransferase 28 family. MurG subfamily.

Its subcellular location is the cell inner membrane. It catalyses the reaction di-trans,octa-cis-undecaprenyl diphospho-N-acetyl-alpha-D-muramoyl-L-alanyl-D-glutamyl-meso-2,6-diaminopimeloyl-D-alanyl-D-alanine + UDP-N-acetyl-alpha-D-glucosamine = di-trans,octa-cis-undecaprenyl diphospho-[N-acetyl-alpha-D-glucosaminyl-(1-&gt;4)]-N-acetyl-alpha-D-muramoyl-L-alanyl-D-glutamyl-meso-2,6-diaminopimeloyl-D-alanyl-D-alanine + UDP + H(+). It participates in cell wall biogenesis; peptidoglycan biosynthesis. In terms of biological role, cell wall formation. Catalyzes the transfer of a GlcNAc subunit on undecaprenyl-pyrophosphoryl-MurNAc-pentapeptide (lipid intermediate I) to form undecaprenyl-pyrophosphoryl-MurNAc-(pentapeptide)GlcNAc (lipid intermediate II). In Rickettsia peacockii (strain Rustic), this protein is UDP-N-acetylglucosamine--N-acetylmuramyl-(pentapeptide) pyrophosphoryl-undecaprenol N-acetylglucosamine transferase.